The following is a 1029-amino-acid chain: Protein SUPPRESSOR OF PHYA-105 1 (1029 aa).

The disordered stretch occupies residues 42–69 (SETANSDCPGSSAHRNVDLTKPPPPEEA). Residues 188–529 (VQMKTPVSSS…ARDILKSELI (342 aa)) form the Protein kinase domain. ATP contacts are provided by residues 194 to 202 (VSSSNFSQL) and Lys216. Positions 213-269 (VVGKNQETPPEFVSDQDLGSKEKKLDISKSPTPHDVLPLKSSPKGNGMVSHGDGNHS) are disordered. Residues 230-239 (LGSKEKKLDI) show a composition bias toward basic and acidic residues. Catalysis depends on Asp316, which acts as the Proton acceptor. A disordered region spans residues 347-392 (EDLNRRRPVVEESSSGGRDSKKRKMDLHLNSPGNQLQATSTGRPFK). The segment covering 377 to 388 (SPGNQLQATSTG) has biased composition (polar residues). Positions 557–589 (VQKKKKASKLLQDIQTLEDDIKEAERRYSSNVS) form a coiled coil. The interval 653–679 (ARSDKTLKDRDRCSENQNENQDMSTKG) is disordered. The span at 654 to 666 (RSDKTLKDRDRCS) shows a compositional bias: basic and acidic residues. Residues 667–679 (ENQNENQDMSTKG) are compositionally biased toward polar residues. WD repeat units follow at residues 714 to 753 (NSAS…NESV), 763 to 803 (VNKS…GFSQ), 806 to 846 (EHQK…SLGT), 848 to 888 (WSPA…TPWC), 892 to 930 (GHEK…SSGL), 932 to 971 (PGAC…YSYY), and 997 to 1029 (DNGQ…LKLV). The short motif at 866–881 (LAFGSADYKVYCYDLR) is the DWD box element.

In terms of assembly, interacts with CO, COP1, HFR1, HY5 and PHYA. Light induces dissociation of the SPA1/COP1 complex. Binds to CRY1 in response to blue light, this interaction prevents SPA1/COP1 complex formation but stimulate CRY2/COP1 complex, and thus avoid COP1-dependent degradation of the transcription factor HY5 by the proteasome and promotes hypocotyl elongation.

It localises to the nucleus speckle. It is found in the nucleus. The protein localises to the PML body. Controls normal photoperiodic flowering and regulates circadian rhythms. Required for suppression of photomorphogenesis in dark-grown seedlings and for normal elongation growth of adult plants. Integral component of the COP1/SPA E3 ubiquitin-protein ligase complex. Involved in HY5, HFR1, LAF1 and CO degradation. The sequence is that of Protein SUPPRESSOR OF PHYA-105 1 (SPA1) from Arabidopsis thaliana (Mouse-ear cress).